Reading from the N-terminus, the 241-residue chain is Regulatory protein VirG (241 aa).

Residues 3–117 (HVLVIDDDVA…EFLARIRVAL (115 aa)) enclose the Response regulatory domain. The residue at position 52 (Asp52) is a 4-aspartylphosphate. Residues 129 to 229 (RRSFYFADWT…ARGAGYFFDA (101 aa)) constitute a DNA-binding region (ompR/PhoB-type).

Phosphorylated by wide host range (WHR) VirA protein.

Its subcellular location is the cytoplasm. Its function is as follows. VirG is required for the positive regulation of at least two vir loci encoded by the Ri plasmid of A.rhizogenes. This is Regulatory protein VirG (virG) from Rhizobium rhizogenes (Agrobacterium rhizogenes).